We begin with the raw amino-acid sequence, 316 residues long: tRNA dimethylallyltransferase (316 aa).

19-26 (GPTASGKT) provides a ligand contact to ATP. Substrate is bound at residue 21-26 (TASGKT). 3 interaction with substrate tRNA regions span residues 44 to 47 (DSAL), 168 to 172 (QRITR), and 249 to 254 (RCVGYR).

Belongs to the IPP transferase family. Monomer. Requires Mg(2+) as cofactor.

The enzyme catalyses adenosine(37) in tRNA + dimethylallyl diphosphate = N(6)-dimethylallyladenosine(37) in tRNA + diphosphate. In terms of biological role, catalyzes the transfer of a dimethylallyl group onto the adenine at position 37 in tRNAs that read codons beginning with uridine, leading to the formation of N6-(dimethylallyl)adenosine (i(6)A). In Colwellia psychrerythraea (strain 34H / ATCC BAA-681) (Vibrio psychroerythus), this protein is tRNA dimethylallyltransferase.